Here is a 397-residue protein sequence, read N- to C-terminus: Tryptophan synthase beta chain (397 aa).

K87 bears the N6-(pyridoxal phosphate)lysine mark.

This sequence belongs to the TrpB family. Tetramer of two alpha and two beta chains. It depends on pyridoxal 5'-phosphate as a cofactor.

It carries out the reaction (1S,2R)-1-C-(indol-3-yl)glycerol 3-phosphate + L-serine = D-glyceraldehyde 3-phosphate + L-tryptophan + H2O. It functions in the pathway amino-acid biosynthesis; L-tryptophan biosynthesis; L-tryptophan from chorismate: step 5/5. Functionally, the beta subunit is responsible for the synthesis of L-tryptophan from indole and L-serine. In Escherichia coli O17:K52:H18 (strain UMN026 / ExPEC), this protein is Tryptophan synthase beta chain.